We begin with the raw amino-acid sequence, 284 residues long: Acetylglutamate kinase (284 aa).

Substrate is bound by residues 64-65 (GG), Arg86, and Asn181.

This sequence belongs to the acetylglutamate kinase family. ArgB subfamily.

It is found in the cytoplasm. It carries out the reaction N-acetyl-L-glutamate + ATP = N-acetyl-L-glutamyl 5-phosphate + ADP. The protein operates within amino-acid biosynthesis; L-arginine biosynthesis; N(2)-acetyl-L-ornithine from L-glutamate: step 2/4. In terms of biological role, catalyzes the ATP-dependent phosphorylation of N-acetyl-L-glutamate. The sequence is that of Acetylglutamate kinase from Nitratiruptor sp. (strain SB155-2).